We begin with the raw amino-acid sequence, 461 residues long: Cysteine--tRNA ligase (461 aa).

Residue cysteine 28 coordinates Zn(2+). A 'HIGH' region motif is present at residues 30–40 (ITIYDLCHIGH). Zn(2+) is bound by residues cysteine 209, histidine 234, and glutamate 238. Positions 266 to 270 (KMSKS) match the 'KMSKS' region motif. An ATP-binding site is contributed by lysine 269.

This sequence belongs to the class-I aminoacyl-tRNA synthetase family. Monomer. Zn(2+) serves as cofactor.

It is found in the cytoplasm. It catalyses the reaction tRNA(Cys) + L-cysteine + ATP = L-cysteinyl-tRNA(Cys) + AMP + diphosphate. The protein is Cysteine--tRNA ligase of Photorhabdus laumondii subsp. laumondii (strain DSM 15139 / CIP 105565 / TT01) (Photorhabdus luminescens subsp. laumondii).